Consider the following 71-residue polypeptide: Large ribosomal subunit protein uL30 (71 aa).

Belongs to the universal ribosomal protein uL30 family. In terms of assembly, part of the 50S ribosomal subunit.

This Mycolicibacterium paratuberculosis (strain ATCC BAA-968 / K-10) (Mycobacterium paratuberculosis) protein is Large ribosomal subunit protein uL30.